The primary structure comprises 479 residues: M-phase inducer phosphatase (479 aa).

The tract at residues 182 to 218 (MTESNTNSTTTPPPKTPETARDCFKRPEPPASANCSP) is disordered. Over residues 199–209 (ETARDCFKRPE) the composition is skewed to basic and acidic residues. Residues 316 to 432 (KVASYRIIDC…FFESHVELCE (117 aa)) form the Rhodanese domain. The active site involves Cys-379. Ser-455 carries the post-translational modification Phosphoserine.

This sequence belongs to the MPI phosphatase family.

It catalyses the reaction O-phospho-L-tyrosyl-[protein] + H2O = L-tyrosyl-[protein] + phosphate. This protein functions as a dosage-dependent inducer in mitotic control. It is a tyrosine protein phosphatase required for progression of the cell cycle. It may directly dephosphorylate Cdk1 and activate the Cdk1 activity. The chain is M-phase inducer phosphatase (stg) from Drosophila melanogaster (Fruit fly).